The chain runs to 252 residues: Intraflagellar transport associated protein 2 (252 aa).

GTP contacts are provided by residues 35 to 42 (GPPKAGKT) and 118 to 125 (WDVSGDKK).

It belongs to the small GTPase superfamily. Rab family. Component of the IFT complex B composed of at least che-2, che-13, dyf-1, dyf-3, dyf-6, dyf-11, dyf-13, ift-20, ift-74, ift-81, ifta-2, osm-1, osm-5 and osm-6. Ciliated sensory neurons.

It is found in the cytoplasm. The protein resides in the cytoskeleton. It localises to the cilium axoneme. Its function is as follows. Component of the intraflagellar transport (IFT) complex B required for transport of proteins in the motile cilium. May be required for ciliary entrance and transport of specific ciliary cargo proteins such as che-3 which are related to motility. Regulates specific signaling activities in the cilia, such as the daf-2/insulin receptor-like transduction pathway. This chain is Intraflagellar transport associated protein 2, found in Caenorhabditis elegans.